Consider the following 1081-residue polypeptide: uncharacterized protein (1081 aa).

Coiled-coil stretches lie at residues 18-131 and 173-242; these read AIEE…FEEN and NHDE…NDDK. Residues 22–53 show a composition bias toward basic and acidic residues; that stretch reads NNKNREIQEKRQKETKDRNDRMVQNQKDRKEM. The interval 22 to 60 is disordered; that stretch reads NNKNREIQEKRQKETKDRNDRMVQNQKDRKEMIGLTNEK. Disordered regions lie at residues 250–321 and 388–1081; these read TDDE…KPGI and QEPK…GNDE. Positions 267–283 are enriched in pro residues; it reads TPTPTPTPTPTPTPTPT. Composition is skewed to low complexity over residues 284-313 and 396-410; these read PTTT…KTST and NNQS…QAGD. Positions 411 to 421 are enriched in basic and acidic residues; sequence DQNKNQNRDEN. 6 stretches are compositionally biased toward low complexity: residues 422 to 568, 576 to 602, 614 to 623, 633 to 644, 662 to 672, and 680 to 733; these read NQGG…NNQE, NQDG…GGEN, GENNQDGGEN, DGENNQDGGENN, GENNQDGGENN, and QDGG…NNQD. Composition is skewed to acidic residues over residues 748–768, 778–832, and 840–854; these read GGED…DNQD, NNQD…DENN, and QDGD…DENN. Composition is skewed to low complexity over residues 855-869 and 877-888; these read NQDG…GENN and NQDGGENNQDGE. The span at 889–954 shows a compositional bias: acidic residues; the sequence is NNQDGDENNN…GDENNQDGDE (66 aa). Low complexity-rich tracts occupy residues 955–975, 983–1026, and 1034–1081; these read NNQG…GGDE, ENNQ…GGDE, and GENN…GNDE.

This is an uncharacterized protein from Dictyostelium discoideum (Social amoeba).